A 329-amino-acid polypeptide reads, in one-letter code: Secretory carrier-associated membrane protein 2 (329 aa).

The disordered stretch occupies residues 1-74; it reads MSAFDTNPFA…PSVEPAQPTP (74 aa). At 1–153 the chain is on the cytoplasmic side; it reads MSAFDTNPFA…DYQRICKMLY (153 aa). Composition is skewed to polar residues over residues 19–31 and 40–51; these read QDPS…NAPQ and FSETNAATTVPA. The chain crosses the membrane as a helical span at residues 154–174; the sequence is YLWMLHSVTLFLNLLACLAWF. The Lumenal segment spans residues 175-181; the sequence is TSDAANG. Residues 182–202 form a helical membrane-spanning segment; it reads TAFGLSILWFLIFTPCAFLCW. The Cytoplasmic segment spans residues 203-218; the sequence is YRPIYKAFRSDNSFSF. The segment at 203–218 is interaction with SLC9A7; it reads YRPIYKAFRSDNSFSF. A helical membrane pass occupies residues 219–239; sequence FVFFFVFFCQIGIYFIQLIGL. Over 240-262 the chain is Lumenal; that stretch reads PNLGTSGWLAALSTMKNGPLAVT. A helical membrane pass occupies residues 263–283; that stretch reads IIMMVVAGFFTLCAGLSLFLL. Residues 284-329 are Cytoplasmic-facing; that stretch reads QRVHAFYRRTGASFQQAQEEFSQGIFSSRTFRGAASSAARGAFQGN. Serine 319 and serine 320 each carry phosphoserine.

It belongs to the SCAMP family. In terms of assembly, interacts with SLC6A4 and SLC9A7. Interacts with SLC9A5; this interaction regulates SLC9A5 cell-surface targeting and SLC9A5 activity.

The protein localises to the golgi apparatus. Its subcellular location is the trans-Golgi network membrane. It is found in the recycling endosome membrane. Its function is as follows. Functions in post-Golgi recycling pathways. Acts as a recycling carrier to the cell surface. The sequence is that of Secretory carrier-associated membrane protein 2 (Scamp2) from Mus musculus (Mouse).